A 339-amino-acid chain; its full sequence is Vomeronasal type-1 receptor A14 (339 aa).

Residues 1-42 (MMGVQICQGMMSEIPFFSPPPQFSYMMNKNIRLHTDSNIRNT) are Extracellular-facing. A helical transmembrane segment spans residues 43–63 (FFTDIGIGISANSLLLLFNIF). Topologically, residues 64–75 (KLTRGQRSRLTD) are cytoplasmic. The helical transmembrane segment at 76–96 (LPIGLLSLINLLMLLMAAFIA) threads the bilayer. Residues 97 to 119 (TDTFISWKGWDDIICKFLVYLYR) lie on the Extracellular side of the membrane. The cysteines at positions 111 and 198 are disulfide-linked. A helical transmembrane segment spans residues 120-140 (TFRGLSLCTSCLLSVLQAIIL). Over 141–160 (SPRSSCLAKFKHKPPHHISC) the chain is Cytoplasmic. Residues 161 to 181 (AILSLSVLYMFIGSHLLVSII) form a helical membrane-spanning segment. Residues 182–213 (ATPNLTTNDFIHVTQSCSILPMSYLMQCMFST) lie on the Extracellular side of the membrane. The N-linked (GlcNAc...) asparagine glycan is linked to asparagine 185. Residues 214 to 234 (LLAIRDVFLISLMVLSTWYMV) form a helical membrane-spanning segment. Topologically, residues 235 to 264 (ALLCRHRKQTRHLQGTSLSPKASPEQRATR) are cytoplasmic. The chain crosses the membrane as a helical span at residues 265 to 285 (SILMLMSLFVLMSVFDSIVCS). The Extracellular segment spans residues 286–296 (SRTMYLNDPIS). Residues 297 to 317 (YSIQLFMVHIYATVSPFVFIV) traverse the membrane as a helical segment. Topologically, residues 318–339 (TEKHIVNFLRSVCEGDECLNIH) are cytoplasmic.

Belongs to the G-protein coupled receptor 1 family.

Its subcellular location is the cell membrane. Putative pheromone receptor implicated in the regulation of social as well as reproductive behavior. In Rattus norvegicus (Rat), this protein is Vomeronasal type-1 receptor A14.